The following is a 125-amino-acid chain: Casein kinase I isoform alpha (125 aa).

A Protein kinase domain is found at 1–125 (GEEVAVKLES…LIDFGLAKKY (125 aa)). ATP is bound at residue K7. D97 functions as the Proton acceptor in the catalytic mechanism.

It belongs to the protein kinase superfamily. CK1 Ser/Thr protein kinase family. Casein kinase I subfamily. As to quaternary structure, interacts with the Axin complex. Interacts with TUT1, leading to TUT1 phosphorylation. Interacts with FAM83A, FAM83B, FAM83C, FAM83D, FAM83E, FAM83F, FAM83G and FAM83H (via DUF1669). Interaction with FAM83H recruits CSNK1A1 to keratin filaments. Post-translationally, phosphorylated by MTOR in response to mitogenic stimulation, leading to its activation.

The protein resides in the cytoplasm. It localises to the cytoskeleton. The protein localises to the microtubule organizing center. Its subcellular location is the centrosome. It is found in the chromosome. The protein resides in the centromere. It localises to the kinetochore. The protein localises to the nucleus speckle. Its subcellular location is the cilium basal body. It is found in the spindle. It catalyses the reaction L-seryl-[protein] + ATP = O-phospho-L-seryl-[protein] + ADP + H(+). The catalysed reaction is L-threonyl-[protein] + ATP = O-phospho-L-threonyl-[protein] + ADP + H(+). Functionally, casein kinases are operationally defined by their preferential utilization of acidic proteins such as caseins as substrates. It can phosphorylate a large number of proteins. Participates in Wnt signaling. Phosphorylates CTNNB1 at 'Ser-45'. May phosphorylate PER1 and PER2. May play a role in segregating chromosomes during mitosis. May play a role in keratin cytoskeleton disassembly and thereby, it may regulate epithelial cell migration. Acts as a positive regulator of mTORC1 and mTORC2 signaling in response to nutrients by mediating phosphorylation of DEPTOR inhibitor. Acts as an inhibitor of NLRP3 inflammasome assembly by mediating phosphorylation of NLRP3. The sequence is that of Casein kinase I isoform alpha (CSNK1A1) from Sus scrofa (Pig).